A 257-amino-acid polypeptide reads, in one-letter code: Phosphonates import ATP-binding protein PhnC (257 aa).

In terms of domain architecture, ABC transporter spans Ile-7–Asp-251. Gly-40 to Ser-47 contacts ATP.

This sequence belongs to the ABC transporter superfamily. Phosphonates importer (TC 3.A.1.9.1) family. In terms of assembly, the complex is composed of two ATP-binding proteins (PhnC), two transmembrane proteins (PhnE) and a solute-binding protein (PhnD).

Its subcellular location is the cell membrane. It catalyses the reaction phosphonate(out) + ATP + H2O = phosphonate(in) + ADP + phosphate + H(+). Its function is as follows. Part of the ABC transporter complex PhnCDE involved in phosphonates import. Responsible for energy coupling to the transport system. The protein is Phosphonates import ATP-binding protein PhnC of Lactobacillus acidophilus (strain ATCC 700396 / NCK56 / N2 / NCFM).